A 1167-amino-acid chain; its full sequence is Outer membrane protein SlpA (1167 aa).

The N-terminal stretch at 1–22 is a signal peptide; sequence MKKSLIALTTALSFGLAAAQTA. Residues 23 to 254 lie on the Periplasmic side of the membrane; the sequence is APVSAPQVPA…RIAALERNAF (232 aa). In terms of domain architecture, SLH spans 29–92; the sequence is QVPALTDVPA…DQMRDGETPA (64 aa). Residues 255–268 form a beta stranded membrane-spanning segment; that stretch reads SVKPSLTIGYSVSR. Residues 269 to 377 are Extracellular-facing; the sequence is TSRNFDVDRL…RNGFGFNNLA (109 aa). Cu(2+) contacts are provided by D274, D276, R305, F308, D310, and E381. The chain crosses the membrane as a beta stranded span at residues 378-403; it reads RYKEGSTDIGISLGFDTSGQFSQVTS. Over 404-416 the chain is Periplasmic; sequence GTGGSLFSTAGRL. The chain crosses the membrane as a beta stranded span at residues 417–428; it reads QVNQIDLNFGLV. The Extracellular segment spans residues 429–471; sequence TGLPSDAYVDTNGNGKKDDGEATGRGTYLGSGGTAAILRDPAG. 5 residues coordinate Fe(3+): D438, N442, K444, D446, and E449. The beta stranded transmembrane segment at 472 to 490 threads the bilayer; it reads NVYRPVFFRFKNATTQFSV. At 491-494 the chain is on the periplasmic side; the sequence is GNNP. The chain crosses the membrane as a beta stranded span at residues 495–500; it reads VIVTLG. Residues 501–519 are Extracellular-facing; the sequence is QQQKFYFSDYVFDNNYDGR. Residues D513 and N515 each coordinate Cu(2+). Residues 520–528 form a beta stranded membrane-spanning segment; that stretch reads GDGFTVTVD. Over 529–540 the chain is Periplasmic; the sequence is GSNVPVIGAWKP. Residues 541–549 form a beta stranded membrane-spanning segment; the sequence is QIKGVYGSR. 4 residues coordinate Cu(2+): R549, G551, D553, and G559. Residues 550-561 are Extracellular-facing; it reads SGLDGTAEAGYG. Residues 562–571 form a beta stranded membrane-spanning segment; it reads VYYRGVRAQI. Over 572 to 577 the chain is Periplasmic; it reads TPVGTL. The beta stranded transmembrane segment at 578 to 588 threads the bilayer; that stretch reads TAGIHYAQEGR. Over 589-601 the chain is Extracellular; the sequence is DMFGAAQNTTSTP. The chain crosses the membrane as a beta stranded span at residues 602–615; it reads SDVTTYGADLHGKA. The Periplasmic segment spans residues 616–617; the sequence is FG. Residues 618-630 traverse the membrane as a beta stranded segment; sequence VELHSEYATSRVR. Position 622 (S622) interacts with deinoxanthin. The Extracellular portion of the chain corresponds to 631-638; the sequence is PNTANAAV. The chain crosses the membrane as a beta stranded span at residues 639 to 649; it reads QTSNAFYARVA. Over 650–670 the chain is Periplasmic; the sequence is TRKDNLAFDLNTPAAKFGNDT. Residues 671-682 form a beta stranded membrane-spanning segment; that stretch reads FGVSLYDLNYRK. Residues 683–753 are Extracellular-facing; that stretch reads IDAGYNNVAG…GTVVATNTKI (71 aa). A Cu(2+)-binding site is contributed by G716. A beta stranded membrane pass occupies residues 754–766; sequence GQMGFGVKAAANL. Residues 767–768 are Periplasmic-facing; sequence GP. The beta stranded transmembrane segment at 769–779 threads the bilayer; the sequence is VAIGGYYDTST. Residues 780–788 are Extracellular-facing; sequence GANGDNANR. A beta stranded transmembrane segment spans residues 789 to 798; sequence MTEAGGSAKV. Residues 799–802 are Periplasmic-facing; sequence AYSI. Residues 803–814 traverse the membrane as a beta stranded segment; sequence FSLRGTYNTLDS. Topologically, residues 815 to 831 are extracellular; that stretch reads NRPQIYRDAAGTQIIGD. Residues 832-843 traverse the membrane as a beta stranded segment; sequence AKVRRYAVQADV. Residues 844–848 lie on the Periplasmic side of the membrane; that stretch reads TPGLG. The chain crosses the membrane as a beta stranded span at residues 849 to 860; it reads LFVGAYYRDVNV. Topologically, residues 861 to 931 are extracellular; sequence NGVRSTTDRG…DQSRTATCFT (71 aa). The beta stranded transmembrane segment at 932–940 threads the bilayer; the sequence is SYGVEAGHA. The Periplasmic portion of the chain corresponds to 941–949; sequence GDNANALVK. Residues 950–960 traverse the membrane as a beta stranded segment; that stretch reads DLFFRVGYSRV. At 961 to 976 the chain is on the extracellular side; the sequence is YVPTTATATTGDFSGS. The beta stranded transmembrane segment at 977–988 threads the bilayer; that stretch reads VTYGDARYDRKV. Topologically, residues 989–990 are periplasmic; that stretch reads GV. The chain crosses the membrane as a beta stranded span at residues 991-1002; the sequence is ANVRLAGSFSTT. Residues 1003-1014 lie on the Extracellular side of the membrane; it reads NTQLDSRPAGTR. A beta stranded membrane pass occupies residues 1015-1023; it reads GAVGLIVRT. The Periplasmic segment spans residues 1024–1032; sequence DPLENVPFR. The beta stranded transmembrane segment at 1033–1046 threads the bilayer; that stretch reads PQFNGQVGYYTADN. The Extracellular segment spans residues 1047–1052; that stretch reads RVAAGN. Residues 1053–1066 form a beta stranded membrane-spanning segment; the sequence is YNANATKYGAGVVL. Residues 1067 to 1073 are Periplasmic-facing; it reads NDFLLPQ. A beta stranded transmembrane segment spans residues 1074-1086; the sequence is TKIGVRYDGYMAQ. Over 1087–1108 the chain is Extracellular; it reads NRQYTPFDGDGTQGYFSDANNN. A beta stranded membrane pass occupies residues 1109–1122; that stretch reads RRTNLNGVYVEGAY. Residues 1123 to 1124 are Periplasmic-facing; the sequence is QD. The chain crosses the membrane as a beta stranded span at residues 1125–1138; sequence LIFSYGTYTLSQKD. At 1139 to 1153 the chain is on the extracellular side; it reads LNGVEYGSGINNGQP. Residues 1154-1166 traverse the membrane as a beta stranded segment; it reads ARGQTFKISYKVN. Position 1167 (F1167) is a topological domain, periplasmic.

As to quaternary structure, homotrimer. Part of a heterooligomeric complex resulting in the main assembly named S-layer deinoxanthin-binding complex (SDBC) which is composed of six different subunits, namely SlpA, DR_2310, DR_0505, DR_A0283, DR_A0282, and DR_A0281.

It localises to the cell envelope. Its subcellular location is the cell outer membrane. The catalysed reaction is L-arginine(in) = L-arginine(out). It carries out the reaction L-lysine(in) = L-lysine(out). The enzyme catalyses L-glutamate(out) = L-glutamate(in). Plays an important role in the structural organization and integrity of the cell envelope, bridging the outer membrane to the peptidoglyan layer. Is a highly abundant molecule in the D.radiodurans cell envelope but is not a fundamental component of the S-layer. Binds the carotenoid deinoxanthin, a strong protective antioxidant specific of this bacterium, and could be part of the first lane of defense against UV radiation, especially under desiccation. Appears to be a nonselective channel. Is able to transport charged amino acids such as Lys, Arg and Glu; the large dimension of the pore points toward the physiological importance of the SDBC complex in assisting and allowing the exchange of substances, including nutrients, with the surrounding environment. This chain is Outer membrane protein SlpA, found in Deinococcus radiodurans (strain ATCC 13939 / DSM 20539 / JCM 16871 / CCUG 27074 / LMG 4051 / NBRC 15346 / NCIMB 9279 / VKM B-1422 / R1).